A 216-amino-acid chain; its full sequence is Nudix hydrolase 26, chloroplastic (216 aa).

The N-terminal 53 residues, 1–53 (MALYRPLLLHHPTSPSVTTFLRNYPSKPIKFSSLPFLHRCRKSRVSSSSARCC), are a transit peptide targeting the chloroplast. Residues 62-209 (GYRRNVGVCL…KKPVYKEVMS (148 aa)) form the Nudix hydrolase domain. A Nudix box motif is present at residues 95-116 (GGIDEGEDPRVAVMRELKEETG). Positions 110 and 114 each coordinate Mn(2+).

Belongs to the Nudix hydrolase family. Requires Mg(2+) as cofactor. The cofactor is Mn(2+). Expressed in roots, leaves, stems and inflorescences.

Its subcellular location is the plastid. The protein resides in the chloroplast. Mediates the hydrolysis of some nucleoside diphosphate derivatives. Can use diadenosine 5',5'''-P(1)P(5) pentaphosphate (Ap(5)A), diadenosine 5',5'''-P(1)P(4) tetraphosphate (Ap(4)A) and diadenosine 5',5'''-P(1)P(3) triphosphate (Ap(3)A) as substrates. The chain is Nudix hydrolase 26, chloroplastic (NUDT26) from Arabidopsis thaliana (Mouse-ear cress).